We begin with the raw amino-acid sequence, 137 residues long: 5-hydroxytryptamine receptor 4 (137 aa).

A helical transmembrane segment spans residues 12–35 (TPLRVAVLLAGCWAIPVLISFLPI). The N-linked (GlcNAc...) asparagine glycan is linked to asparagine 58. A helical membrane pass occupies residues 67 to 90 (NKPYAITCSVVAFYIPFLLMVLAY). Residues 112–137 (APAEGRPPSADQHSTHRMRTETKAAK) form a disordered region.

Belongs to the G-protein coupled receptor 1 family. As to quaternary structure, interacts (via C-terminus 330-346 AA) with GRK5; this interaction is promoted by 5-HT (serotonin).

It is found in the cell membrane. It localises to the endosome membrane. In terms of biological role, G-protein coupled receptor for 5-hydroxytryptamine (serotonin), a biogenic hormone that functions as a neurotransmitter, a hormone and a mitogen. Ligand binding causes a conformation change that triggers signaling via guanine nucleotide-binding proteins (G proteins) and modulates the activity of downstream effectors. HTR4 is coupled to G(s) G alpha proteins and mediates activation of adenylate cyclase activity. In Sus scrofa (Pig), this protein is 5-hydroxytryptamine receptor 4 (HTR4).